We begin with the raw amino-acid sequence, 494 residues long: Probable cytosol aminopeptidase (494 aa).

Mn(2+)-binding residues include Lys264 and Asp269. The active site involves Lys276. Residues Asp287, Asp346, and Glu348 each coordinate Mn(2+). Arg350 is a catalytic residue.

This sequence belongs to the peptidase M17 family. Mn(2+) is required as a cofactor.

The protein localises to the cytoplasm. It carries out the reaction Release of an N-terminal amino acid, Xaa-|-Yaa-, in which Xaa is preferably Leu, but may be other amino acids including Pro although not Arg or Lys, and Yaa may be Pro. Amino acid amides and methyl esters are also readily hydrolyzed, but rates on arylamides are exceedingly low.. It catalyses the reaction Release of an N-terminal amino acid, preferentially leucine, but not glutamic or aspartic acids.. Presumably involved in the processing and regular turnover of intracellular proteins. Catalyzes the removal of unsubstituted N-terminal amino acids from various peptides. This is Probable cytosol aminopeptidase (pepA) from Pasteurella multocida (strain Pm70).